Consider the following 471-residue polypeptide: Putative ABC transporter ATP-binding protein STK_11360 (471 aa).

ABC transporter domains lie at 4 to 241 (LEIK…LEPL) and 255 to 470 (VILE…VIKD). ATP contacts are provided by residues 37–44 (GKSGSGKS) and 286–293 (GDNGSGKS).

Belongs to the ABC transporter superfamily.

It is found in the cell membrane. In terms of biological role, probably part of an ABC transporter complex. Responsible for energy coupling to the transport system. This Sulfurisphaera tokodaii (strain DSM 16993 / JCM 10545 / NBRC 100140 / 7) (Sulfolobus tokodaii) protein is Putative ABC transporter ATP-binding protein STK_11360.